We begin with the raw amino-acid sequence, 257 residues long: Ribosomal RNA small subunit methyltransferase J (257 aa).

Residues Arg107–Asp108, Glu123–Arg124, and Asp177 contribute to the S-adenosyl-L-methionine site.

The protein belongs to the methyltransferase superfamily. RsmJ family.

The protein resides in the cytoplasm. It carries out the reaction guanosine(1516) in 16S rRNA + S-adenosyl-L-methionine = N(2)-methylguanosine(1516) in 16S rRNA + S-adenosyl-L-homocysteine + H(+). Functionally, specifically methylates the guanosine in position 1516 of 16S rRNA. The sequence is that of Ribosomal RNA small subunit methyltransferase J from Haemophilus influenzae (strain PittGG).